We begin with the raw amino-acid sequence, 88 residues long: DNA-directed RNA polymerase subunit omega (88 aa).

The protein belongs to the RNA polymerase subunit omega family. As to quaternary structure, the RNAP catalytic core consists of 2 alpha, 1 beta, 1 beta' and 1 omega subunit. When a sigma factor is associated with the core the holoenzyme is formed, which can initiate transcription.

The enzyme catalyses RNA(n) + a ribonucleoside 5'-triphosphate = RNA(n+1) + diphosphate. Functionally, promotes RNA polymerase assembly. Latches the N- and C-terminal regions of the beta' subunit thereby facilitating its interaction with the beta and alpha subunits. The polypeptide is DNA-directed RNA polymerase subunit omega (Pseudomonas aeruginosa (strain LESB58)).